The chain runs to 153 residues: Troponin C (153 aa).

Alanine 1 bears the Blocked amino end (Ala) mark. 4 consecutive EF-hand domains span residues 10–45 (EQVQMLRKAFDMFDRDKKGVIHTNMVSTILRTLGQT), 46–81 (FEEKDLKDLIAEIDQDGSGELEFEEFMALAARFLVE), 86–121 (AMQEELREAFRLYDKQGQGFINVSDLRDILRALDDK), and 122–153 (LTEDELDEMIAEIDTDGSGTVDFDEFMEMMTG). 12 residues coordinate Ca(2+): aspartate 59, aspartate 61, serine 63, glutamate 65, glutamate 70, aspartate 99, aspartate 110, aspartate 135, aspartate 137, serine 139, threonine 141, and glutamate 146.

This sequence belongs to the troponin C family.

In terms of biological role, troponin is the central regulatory protein of striated muscle contraction. Tn consists of three components: Tn-I which is the inhibitor of actomyosin ATPase, Tn-T which contains the binding site for tropomyosin and Tn-C. The binding of calcium to Tn-C abolishes the inhibitory action of Tn on actin filaments. In Tachypleus tridentatus (Japanese horseshoe crab), this protein is Troponin C.